A 144-amino-acid chain; its full sequence is NADPH-dependent 7-cyano-7-deazaguanine reductase (144 aa).

A compositionally biased stretch (polar residues) spans 1-21 (MSQSPIQNPTSDPNAQSVQET). The interval 1–27 (MSQSPIQNPTSDPNAQSVQETSESKYG) is disordered. The active-site Thioimide intermediate is the C61. The Proton donor role is filled by D68. Substrate is bound by residues 83–85 (VEL) and 102–103 (HE).

The protein belongs to the GTP cyclohydrolase I family. QueF type 1 subfamily.

The protein localises to the cytoplasm. The catalysed reaction is 7-aminomethyl-7-carbaguanine + 2 NADP(+) = 7-cyano-7-deazaguanine + 2 NADPH + 3 H(+). It functions in the pathway tRNA modification; tRNA-queuosine biosynthesis. Functionally, catalyzes the NADPH-dependent reduction of 7-cyano-7-deazaguanine (preQ0) to 7-aminomethyl-7-deazaguanine (preQ1). This is NADPH-dependent 7-cyano-7-deazaguanine reductase from Acaryochloris marina (strain MBIC 11017).